We begin with the raw amino-acid sequence, 410 residues long: L-sorbose 1-phosphate reductase (410 aa).

Residues cysteine 40, histidine 69, and glutamate 70 each contribute to the Zn(2+) site. NAD(+) is bound by residues arginine 221 and 309-310; that span reads GT.

This sequence belongs to the zinc-containing alcohol dehydrogenase family. It depends on Zn(2+) as a cofactor.

Functionally, reduces L-sorbose 1-phosphate to D-glucitol 6-phosphate. This is L-sorbose 1-phosphate reductase (sorE) from Klebsiella pneumoniae.